A 162-amino-acid polypeptide reads, in one-letter code: Transcription elongation factor GreA (162 aa).

A coiled-coil region spans residues 44–69 (SENAEYEAAREKQAFVEARIKHLEDI).

Belongs to the GreA/GreB family.

Functionally, necessary for efficient RNA polymerase transcription elongation past template-encoded arresting sites. The arresting sites in DNA have the property of trapping a certain fraction of elongating RNA polymerases that pass through, resulting in locked ternary complexes. Cleavage of the nascent transcript by cleavage factors such as GreA or GreB allows the resumption of elongation from the new 3'terminus. GreA releases sequences of 2 to 3 nucleotides. The chain is Transcription elongation factor GreA from Rickettsia bellii (strain RML369-C).